Here is a 281-residue protein sequence, read N- to C-terminus: Diaminopimelate epimerase (281 aa).

N13 and N66 together coordinate substrate. The active-site Proton donor is the C75. Substrate contacts are provided by residues 76 to 77, N164, N197, and 215 to 216; these read GN and ER. The active-site Proton acceptor is the C224. 225-226 is a substrate binding site; sequence GT.

The protein belongs to the diaminopimelate epimerase family. As to quaternary structure, homodimer.

Its subcellular location is the cytoplasm. The enzyme catalyses (2S,6S)-2,6-diaminopimelate = meso-2,6-diaminopimelate. It participates in amino-acid biosynthesis; L-lysine biosynthesis via DAP pathway; DL-2,6-diaminopimelate from LL-2,6-diaminopimelate: step 1/1. Catalyzes the stereoinversion of LL-2,6-diaminopimelate (L,L-DAP) to meso-diaminopimelate (meso-DAP), a precursor of L-lysine and an essential component of the bacterial peptidoglycan. This is Diaminopimelate epimerase from Rippkaea orientalis (strain PCC 8801 / RF-1) (Cyanothece sp. (strain PCC 8801)).